The following is a 314-amino-acid chain: Cytochrome bo(3) ubiquinol oxidase subunit 2 (314 aa).

The first 23 residues, 1-23 (MSKKRYPRLFGILPFLGMLLLSG), serve as a signal peptide directing secretion. Cys-24 carries N-palmitoyl cysteine lipidation. The S-diacylglycerol cysteine moiety is linked to residue Cys-24. Over 24–42 (CNWTLLDPKGQVGIEQKNL) the chain is Periplasmic. A helical membrane pass occupies residues 43 to 63 (ILIATGLMLLVVIPVIIMTVV). Over 64–86 (FAWKYRASNKAATYTPDWSHSTK) the chain is Cytoplasmic. A helical membrane pass occupies residues 87 to 107 (IEAAVWIIPILIIIALGYFTY). The Periplasmic portion of the chain corresponds to 108 to 314 (HSTHKLDPYR…SMQPAAGAEE (207 aa)). Basic and acidic residues predominate over residues 278–293 (YEGMNRGRPSHEEAGS). The interval 278–314 (YEGMNRGRPSHEEAGSKDLATTKGVESSMQPAAGAEE) is disordered.

This sequence belongs to the cytochrome c oxidase subunit 2 family. As to quaternary structure, heterooctamer of two A chains, two B chains, two C chains and two D chains.

The protein resides in the cell inner membrane. In terms of biological role, cytochrome bo(3) ubiquinol terminal oxidase is the component of the aerobic respiratory chain of E.coli that predominates when cells are grown at high aeration. Has proton pump activity across the membrane in addition to electron transfer, pumping 2 protons/electron. The protein is Cytochrome bo(3) ubiquinol oxidase subunit 2 (cyoA) of Pseudomonas putida (Arthrobacter siderocapsulatus).